A 474-amino-acid chain; its full sequence is Glutamate--tRNA ligase (474 aa).

The 'HIGH' region signature appears at 9-19 (PSPTGLLHMGG). The short motif at 238-242 (KLSKR) is the 'KMSKS' region element. Residue K241 coordinates ATP.

Belongs to the class-I aminoacyl-tRNA synthetase family. Glutamate--tRNA ligase type 1 subfamily. Monomer.

The protein localises to the cytoplasm. It carries out the reaction tRNA(Glu) + L-glutamate + ATP = L-glutamyl-tRNA(Glu) + AMP + diphosphate. Functionally, catalyzes the attachment of glutamate to tRNA(Glu) in a two-step reaction: glutamate is first activated by ATP to form Glu-AMP and then transferred to the acceptor end of tRNA(Glu). The sequence is that of Glutamate--tRNA ligase from Buchnera aphidicola subsp. Cinara cedri (strain Cc).